The sequence spans 89 residues: MANTPSAKKAVRKIERRTEVNRSRRSRVRTYLRKLEDALTAGDATAATAAFQAAEPEIMRAVTKGVLHKNTASRKVSRLAARVKKLSAA.

Belongs to the bacterial ribosomal protein bS20 family.

Its function is as follows. Binds directly to 16S ribosomal RNA. The chain is Small ribosomal subunit protein bS20 from Xanthobacter autotrophicus (strain ATCC BAA-1158 / Py2).